We begin with the raw amino-acid sequence, 151 residues long: Small ribosomal subunit protein uS15 (151 aa).

The segment at 1–20 (MGRMHSNGKGISGSSLPYNR) is disordered.

This sequence belongs to the universal ribosomal protein uS15 family. Component of the small ribosomal subunit. Part of the small subunit (SSU) processome, composed of more than 70 proteins and the RNA chaperone small nucleolar RNA (snoRNA) U3.

Its subcellular location is the cytoplasm. The protein resides in the nucleus. The protein localises to the nucleolus. Its function is as follows. Component of the small ribosomal subunit. The ribosome is a large ribonucleoprotein complex responsible for the synthesis of proteins in the cell. Part of the small subunit (SSU) processome, first precursor of the small eukaryotic ribosomal subunit. During the assembly of the SSU processome in the nucleolus, many ribosome biogenesis factors, an RNA chaperone and ribosomal proteins associate with the nascent pre-rRNA and work in concert to generate RNA folding, modifications, rearrangements and cleavage as well as targeted degradation of pre-ribosomal RNA by the RNA exosome. The protein is Small ribosomal subunit protein uS15 (rps13) of Dictyostelium discoideum (Social amoeba).